Reading from the N-terminus, the 152-residue chain is Transcriptional regulator MraZ (152 aa).

2 consecutive SpoVT-AbrB domains span residues A5–E52 and A81–T124.

This sequence belongs to the MraZ family. As to quaternary structure, forms oligomers.

It is found in the cytoplasm. The protein resides in the nucleoid. Functionally, negatively regulates its own expression and that of the subsequent genes in the proximal part of the division and cell wall (dcw) gene cluster. Acts by binding directly to DNA. May also regulate the expression of genes outside the dcw cluster. The polypeptide is Transcriptional regulator MraZ (Salmonella paratyphi A (strain ATCC 9150 / SARB42)).